The sequence spans 261 residues: Putative methyltransferase MJ0046 (261 aa).

Belongs to the methyltransferase superfamily.

In Methanocaldococcus jannaschii (strain ATCC 43067 / DSM 2661 / JAL-1 / JCM 10045 / NBRC 100440) (Methanococcus jannaschii), this protein is Putative methyltransferase MJ0046.